A 709-amino-acid polypeptide reads, in one-letter code: Dibasic-processing endoprotease (709 aa).

The signal sequence occupies residues 1–22 (MHPALLCGPILAIFLQFLVSSC). 2 propeptides span residues 23–82 (SPLE…IRKR) and 83–102 (GIDA…RYKR). The Lumenal segment spans residues 103–668 (DASESDELLN…QPVLEPSYRE (566 aa)). A Peptidase S8 domain is found at 128 to 440 (QWHIFNSNNP…FGKLDASKFV (313 aa)). Asn-155 is a glycosylation site (N-linked (GlcNAc...) asparagine). Residues Asp-162 and His-200 each act as charge relay system in the active site. Cystine bridges form between Cys-216-Cys-363 and Cys-308-Cys-338. Ser-371 (charge relay system) is an active-site residue. The P/Homo B domain occupies 449 to 588 (VNPQTWLIAP…QLALWGESEN (140 aa)). N-linked (GlcNAc...) asparagine glycans are attached at residues Asn-463, Asn-471, and Asn-620. The helical transmembrane segment at 669 to 693 (IVAFITFFLLFAFIFVAVIWTWISA) threads the bilayer. The Cytoplasmic portion of the chain corresponds to 694 to 709 (FWKAKAPPPLSQQEIA).

The protein belongs to the peptidase S8 family. Furin subfamily. The cofactor is Ca(2+). N-glycosylated.

The protein resides in the golgi apparatus. It is found in the trans-Golgi network membrane. Functionally, membrane-bound, subtilisin-like serine protease that processes the P-factor precursor and other precursor proteins. Essential for cell viability. Cleaves substrate on the C-terminal side of dibasic residues. The sequence is that of Dibasic-processing endoprotease (krp1) from Schizosaccharomyces pombe (strain 972 / ATCC 24843) (Fission yeast).